The sequence spans 402 residues: Phosphoglycerate kinase (402 aa).

Substrate contacts are provided by residues 24–26 (DLN), Arg-39, 62–65 (HLGR), Arg-121, and Arg-161. ATP contacts are provided by residues Lys-211, Gly-299, Glu-330, and 359-362 (GGDS).

This sequence belongs to the phosphoglycerate kinase family. Monomer.

The protein localises to the cytoplasm. The catalysed reaction is (2R)-3-phosphoglycerate + ATP = (2R)-3-phospho-glyceroyl phosphate + ADP. It functions in the pathway carbohydrate degradation; glycolysis; pyruvate from D-glyceraldehyde 3-phosphate: step 2/5. The chain is Phosphoglycerate kinase from Mycolicibacterium gilvum (strain PYR-GCK) (Mycobacterium gilvum (strain PYR-GCK)).